The primary structure comprises 690 residues: Proprotein convertase subtilisin/kexin type 9 (690 aa).

The first 28 residues, 1-28 (MGTVRSRRLWWPLPLLLLLLRGPAGARA), serve as a signal peptide directing secretion. A propeptide spanning residues 29-150 (QEDDDGDYEE…IEEDSYVFAQ (122 aa)) is cleaved from the precursor. The residue at position 36 (Y36) is a Sulfotyrosine. Residue S45 is modified to Phosphoserine. The Inhibitor I9 domain maps to 75–147 (TYVVVLKEET…VDYIEEDSYV (73 aa)). Residues 153 to 459 (PWNLERITPA…GWQLFCRTVW (307 aa)) form the Peptidase S8 domain. Residues D184 and H224 each act as charge relay system in the active site. 2 cysteine pairs are disulfide-bonded: C221-C253 and C321-C356. The active-site Charge relay system is S384. The tract at residues 448–690 (GAGWQLFCRT…HLAQASQELQ (243 aa)) is C-terminal domain. 3 cysteine pairs are disulfide-bonded: C455–C525, C475–C524, and C484–C507. N-linked (GlcNAc...) asparagine glycosylation occurs at N531. Disulfide bonds link C532–C599, C550–C598, C560–C586, C606–C677, C624–C676, and C633–C652. Residue S686 is modified to Phosphoserine.

The protein belongs to the peptidase S8 family. Monomer. Can self-associate to form dimers and higher multimers which may have increased LDLR degrading activity. The precursor protein but not the mature protein may form multimers. Interacts with APOB, VLDLR, LRP8/APOER2 and BACE1. The full-length immature form (pro-PCSK9) interacts with SCNN1A, SCNN1B and SCNN1G. The pro-PCSK9 form (via C-terminal domain) interacts with LDLR. Interacts (via the C-terminal domain) with ANXA2 (via repeat Annexin 1); the interaction inhibits the degradation of LDLR. Ca(2+) is required as a cofactor. Cleavage by furin and PCSK5 generates a truncated inactive protein that is unable to induce LDLR degradation. In terms of processing, undergoes autocatalytic cleavage in the endoplasmic reticulum to release the propeptide from the N-terminus and the cleavage of the propeptide is strictly required for its maturation and activation. The cleaved propeptide however remains associated with the catalytic domain through non-covalent interactions, preventing potential substrates from accessing its active site. As a result, it is secreted from cells as a propeptide-containing, enzymatically inactive protein. Post-translationally, phosphorylation protects the propeptide against proteolysis.

The protein resides in the cytoplasm. Its subcellular location is the secreted. It localises to the endosome. It is found in the lysosome. The protein localises to the cell surface. The protein resides in the endoplasmic reticulum. Its subcellular location is the golgi apparatus. Its proteolytic activity is autoinhibited by the non-covalent binding of the propeptide to the catalytic domain. Inhibited by EGTA. In terms of biological role, crucial player in the regulation of plasma cholesterol homeostasis. Binds to low-density lipid receptor family members: low density lipoprotein receptor (LDLR), very low density lipoprotein receptor (VLDLR), apolipoprotein E receptor (LRP1/APOER) and apolipoprotein receptor 2 (LRP8/APOER2), and promotes their degradation in intracellular acidic compartments. Acts via a non-proteolytic mechanism to enhance the degradation of the hepatic LDLR through a clathrin LDLRAP1/ARH-mediated pathway. May prevent the recycling of LDLR from endosomes to the cell surface or direct it to lysosomes for degradation. Can induce ubiquitination of LDLR leading to its subsequent degradation. Inhibits intracellular degradation of APOB via the autophagosome/lysosome pathway in a LDLR-independent manner. Involved in the disposal of non-acetylated intermediates of BACE1 in the early secretory pathway. Inhibits epithelial Na(+) channel (ENaC)-mediated Na(+) absorption by reducing ENaC surface expression primarily by increasing its proteasomal degradation. Regulates neuronal apoptosis via modulation of LRP8/APOER2 levels and related anti-apoptotic signaling pathways. This chain is Proprotein convertase subtilisin/kexin type 9 (PCSK9), found in Ateles geoffroyi (Black-handed spider monkey).